The primary structure comprises 142 residues: Semaphorin-like protein VACWR164 (142 aa).

The Sema domain maps to 1–142 (MNTIKQSFST…MPQMKKILKM (142 aa)).

The protein belongs to the semaphorin family.

The sequence is that of Semaphorin-like protein VACWR164 from Bos taurus (Bovine).